Here is a 436-residue protein sequence, read N- to C-terminus: MSRHFRTHTTSRLTFPSSSGGLAITRLPFSSTSSKLLLQQLSSTSPAAAATAVTITTSSPARNLQRARASAAEQGMEEHGKAAVGWAARDDSGVLSPYNFSRRAQKDDDVTIKVLYCGICHTDLHVVKNDWGNAMYPVVPGHEIVGVVTGVGAGVTKFKAGDTVGVGFFVGSCRTCDSCGKGYENYCPTMVITSNGKDYGGAATQGGFSDAIVVNEHYVLRVPAGLPLDGAAPLLCAGVTVYSPMVIHGLNAPGKHVGVVGLGGLGHVAVKFAKAFGMRVTVISTSPGKRREALEHLGADEFLVSRDAGQMAAAAGTMDGILNTVSAWHPVAPLFALMKPMAQMVFVGAPTRPLELPAYAIVPGGKGITGNCVGGIRDCQAMLDFAGEHGITAEVEVIKMDYVNTAMERLEKNDVRYRFVIDVAGSSLGGSGDDKI.

Cys120 provides a ligand contact to Zn(2+). Position 122 (Thr122) interacts with NADP(+). Zn(2+)-binding residues include His142, Glu143, Cys173, Cys176, Cys179, Cys187, and Cys236. NADP(+) contacts are provided by residues Thr240, 261–266 (GLGGLG), 284–289 (STSPGK), Thr324, Gly348, and 371–373 (NCV).

This sequence belongs to the zinc-containing alcohol dehydrogenase family. Homodimer. The cofactor is Zn(2+).

It catalyses the reaction (E)-cinnamyl alcohol + NADP(+) = (E)-cinnamaldehyde + NADPH + H(+). The catalysed reaction is (E)-coniferol + NADP(+) = (E)-coniferaldehyde + NADPH + H(+). It carries out the reaction (E)-sinapyl alcohol + NADP(+) = (E)-sinapaldehyde + NADPH + H(+). The enzyme catalyses (E)-4-coumaroyl alcohol + NADP(+) = (E)-4-coumaraldehyde + NADPH + H(+). It catalyses the reaction (E)-caffeyl alcohol + NADP(+) = (E)-caffeyl aldehyde + NADPH + H(+). Its pathway is aromatic compound metabolism; phenylpropanoid biosynthesis. Involved in lignin biosynthesis. Catalyzes the final step specific for the production of lignin monomers. Catalyzes the NADPH-dependent reduction of coniferaldehyde, 5-hydroxyconiferaldehyde, sinapaldehyde, 4-coumaraldehyde and caffeyl aldehyde to their respective alcohols. The chain is Probable cinnamyl alcohol dehydrogenase 8B from Oryza sativa subsp. japonica (Rice).